The following is an 875-amino-acid chain: Alanine--tRNA ligase (875 aa).

Zn(2+) contacts are provided by H564, H568, C666, and H670.

The protein belongs to the class-II aminoacyl-tRNA synthetase family. As to quaternary structure, homotetramer. It depends on Zn(2+) as a cofactor.

It is found in the cytoplasm. It catalyses the reaction tRNA(Ala) + L-alanine + ATP = L-alanyl-tRNA(Ala) + AMP + diphosphate. Catalyzes the attachment of alanine to tRNA(Ala) in a two-step reaction: alanine is first activated by ATP to form Ala-AMP and then transferred to the acceptor end of tRNA(Ala). Also edits incorrectly charged Ser-tRNA(Ala) and Gly-tRNA(Ala) via its editing domain. The sequence is that of Alanine--tRNA ligase from Serratia proteamaculans (strain 568).